The chain runs to 588 residues: Tripartite motif-containing protein 29 (588 aa).

A disordered region spans residues 1–66; sequence MEAADASRSN…GSALKPGEGR (66 aa). Phosphoserine occurs at positions 21, 28, 58, and 104. Tyr106 carries the phosphotyrosine modification. The segment at 220–260 adopts a B box-type zinc-finger fold; it reads FEARKCPVHGKTMELFCQTDQTCICYLCMFQEHKNHSTVTV. Residues Cys225, His228, Cys247, and His252 each contribute to the Zn(2+) site. Positions 259-352 form a coiled coil; that stretch reads TVEEAKAEKE…VKVIMDALDE (94 aa). Thr476 is subject to Phosphothreonine. A Phosphoserine modification is found at Ser489.

As to quaternary structure, interacts with VIM and HINT1. Interacts with IKBKG/NEMO. Interacts with STING1. In terms of processing, constitutively phosphorylated by PKC on serine/threonine in A431 cells. In terms of tissue distribution, expressed in placenta, prostate and thymus.

It localises to the cytoplasm. The protein localises to the lysosome. Its function is as follows. Plays a crucial role in the regulation of macrophage activation in response to viral or bacterial infections within the respiratory tract. Mechanistically, TRIM29 interacts with IKBKG/NEMO in the lysosome where it induces its 'Lys-48' ubiquitination and subsequent degradation. In turn, the expression of type I interferons and the production of pro-inflammatory cytokines are inhibited. Additionally, induces the 'Lys-48' ubiquitination of STING1 in a similar way, leading to its degradation. In Homo sapiens (Human), this protein is Tripartite motif-containing protein 29 (TRIM29).